The chain runs to 217 residues: Ependymin (217 aa).

Positions methionine 1–alanine 20 are cleaved as a signal peptide. Residues asparagine 73 and asparagine 96 are each glycosylated (N-linked (GlcNAc...) asparagine).

Belongs to the ependymin family. Forms disulfide-linked dimers. In terms of processing, binds calcium through the terminal sialic acids. In terms of tissue distribution, EPDs are synthesized in the meninx and secreted in the cerebrospinal fluid.

It is found in the secreted. Its function is as follows. May play a role in neural plasticity. May be involved during axon regeneration. In Danio rerio (Zebrafish), this protein is Ependymin (epd).